A 158-amino-acid polypeptide reads, in one-letter code: Tryptophan-rich sensory protein (158 aa).

Transmembrane regions (helical) follow at residues 5 to 25, 44 to 65, 73 to 93, 97 to 119, and 124 to 144; these read WALF…GALL, WVFP…MRVA, ALAF…VFFG, MATA…WAFF, and WAGV…GLNF.

The protein belongs to the TspO/BZRP family. As to quaternary structure, homodimer.

The protein resides in the membrane. It is found in the cell inner membrane. Functionally, may play a role in the transmembrane transport of tetrapyrroles and similar compounds, and thereby contribute to the regulation of tetrapyrrole biosynthesis. Binds tetrapyrroles and promotes the photooxidative degradation of protoporphyrin IX. Binds protoporphyrin IX, hemin, and coproporphyrin III, but does not bind delta-aminolevulinic acid. Can bind bilirubin, curcumin, gossypol, retinoic acid, cholesterol and the benzodiazepine receptor agonist PK-11195 (in vitro). Plays a role in the response to low oxygen levels and in the regulation of the biosynthesis of photosynthetic pigments. The polypeptide is Tryptophan-rich sensory protein (Cereibacter sphaeroides (Rhodobacter sphaeroides)).